We begin with the raw amino-acid sequence, 1438 residues long: Membrane-anchored lipid-binding protein YSP2 (1438 aa).

Over residues 1–17 the composition is skewed to basic and acidic residues; sequence MRDEATRKKRSFSDGHF. Disordered regions lie at residues 1–97, 174–194, 200–219, 285–308, 338–418, 455–485, and 505–543; these read MRDE…SHTP, KVKH…NERP, QKDD…SAPN, QQQH…QNPN, TSGP…KVKF, DENN…LGPK, and SQSN…RYSS. The Cytoplasmic segment spans residues 1–1277; the sequence is MRDEATRKKR…SAFSMLQQVN (1277 aa). Position 13 is a phosphoserine (Ser13). The span at 18–29 shows a compositional bias: basic residues; sequence FKKLKLMSRKKQ. A compositionally biased stretch (basic and acidic residues) spans 30-44; sequence PVMERSKTTRTRKES. Residues 45-58 are compositionally biased toward low complexity; sequence TNSAAKSSLSLRRA. The span at 74 to 97 shows a compositional bias: polar residues; that stretch reads IGSTNEGVAGNSGSNSPAQYSHTP. Composition is skewed to low complexity over residues 286–298 and 374–398; these read QQHP…GPLP and PTNT…ANSN. A Phosphoserine modification is found at Ser411. A compositionally biased stretch (low complexity) spans 455–470; that stretch reads DENNTNNNPNASSTNL. Positions 471 to 485 are enriched in polar residues; the sequence is SHISKSNVNNNLGPK. Ser596 is subject to Phosphoserine. In terms of domain architecture, GRAM spans 648–716; sequence EFHTLFKDCD…KEIVQIEKKT (69 aa). The disordered stretch occupies residues 777-843; that stretch reads SSSAFFDDSD…LGPNKHSPTT (67 aa). Residues 783 to 800 are compositionally biased toward acidic residues; that stretch reads DDSDDNDDDGDLDDDDPD. Residues 818 to 832 show a composition bias toward polar residues; the sequence is NESNDLGKNQKSTNY. The 168-residue stretch at 851-1018 folds into the VASt 1 domain; the sequence is NDHLVIEANI…EIKKILSDED (168 aa). Phosphoserine is present on Ser1032. In terms of domain architecture, VASt 2 spans 1059–1225; sequence DDTVIDEKIN…DLKKIISNAS (167 aa). Residues 1225–1257 are disordered; sequence SSTKKKSRRRGKTVNKRKSSPSTIKNEKNEENF. Residues 1227 to 1243 show a composition bias toward basic residues; sequence TKKKSRRRGKTVNKRKS. A helical transmembrane segment spans residues 1278–1298; it reads ITSVQGIMTIISFFICLIFFF. At 1299–1438 the chain is on the lumenal side; it reads RLLFHSKNTS…DNTSATNQLL (140 aa). Residues Asn1306, Asn1373, and Asn1430 are each glycosylated (N-linked (GlcNAc...) asparagine).

Belongs to the YSP2 family.

The protein resides in the mitochondrion membrane. It is found in the endoplasmic reticulum membrane. Functionally, involved in induction of programmed cell death in response to reactive oxygen species (ROS). May be involved in sterol transfer between intracellular membranes. This is Membrane-anchored lipid-binding protein YSP2 from Saccharomyces cerevisiae (strain ATCC 204508 / S288c) (Baker's yeast).